Reading from the N-terminus, the 310-residue chain is Proline iminopeptidase (310 aa).

Positions 33–290 (PVIFLHGGPG…RVVQAGHRAF (258 aa)) constitute an AB hydrolase-1 domain. The active-site Nucleophile is the serine 107. Aspartate 260 is an active-site residue. Catalysis depends on histidine 287, which acts as the Proton donor.

This sequence belongs to the peptidase S33 family.

The protein resides in the cytoplasm. The catalysed reaction is Release of N-terminal proline from a peptide.. Specifically catalyzes the removal of N-terminal proline residues from peptides. The chain is Proline iminopeptidase (pip) from Neisseria meningitidis serogroup B (strain ATCC BAA-335 / MC58).